The chain runs to 202 residues: Protein phosphatase 1 regulatory subunit 1B (202 aa).

Met1 is modified (N-acetylmethionine). Residues 1–202 (MDPKDRKKIQ…QRPAHPEPGT (202 aa)) form a disordered region. Phosphothreonine; by PKA is present on Thr34. The segment covering 41–63 (LSEHSSPEEEASPHQRASGEGHH) has biased composition (basic and acidic residues). A phosphoserine mark is found at Ser45 and Ser46. A Phosphothreonine; by CDK5 modification is found at Thr75. Residues 89–100 (HLQSISNLGENQ) are compositionally biased toward polar residues. Position 102 is a phosphoserine (Ser102). A compositionally biased stretch (basic and acidic residues) spans 109–118 (GELRELGYPR). The segment covering 119–136 (EEEEEEEEEDEEEEEDSQ) has biased composition (acidic residues). Ser135 bears the Phosphoserine mark. Basic and acidic residues predominate over residues 191–202 (EPQRPAHPEPGT).

The protein belongs to the protein phosphatase inhibitor 1 family. Dopamine- and cyclic AMP-regulated neuronal phosphoprotein. Post-translationally, phosphorylation of Thr-34 is required for activity.

It is found in the cytoplasm. Inhibitor of protein-phosphatase 1. In Bos taurus (Bovine), this protein is Protein phosphatase 1 regulatory subunit 1B (PPP1R1B).